The sequence spans 529 residues: MQQRRPVRRALLSVSDKAGIVEFAQALSARGVELLSTGGTARLLADKGLPVTEVSDYTGFPEMMDGRVKTLHPKVHGGILGRRGQDDGIMQQHGIAPIDMVVVNLYPFAQTVAREGCSLEDAVENIDIGGPTMVRSAAKNHKDVAIVVKSSDYDAIINEMDANEGSLTLVTRFDLAIKAFEHTAAYDSMIANYFGSMVPAYHGESKEAAGRFPRTLNLNFIKKQDMRYGENSHQQAAFYIEENVKEASVATATQLQGKALSYNNIADTDAALECVKEFNEPACVIVKHANPCGVAVSNSILDAYDRAYKTDPTSAFGGIIAFNRELDAETAQAIISRQFVEVIIAPSASEEALKITAAKQNVRVLTCGQWDTRVAGLDFKRVNGGLLVQDRDLGMVTAGELRVVSKRQPTEQELRDALFCWKVAKFVKSNAIVYAKDNMTIGIGAGQMSRVYSAKIAGIKAGDEGLEVKGSAMASDAFFPFRDGIDAAAAVGITCVIQPGGSIRDDEVIAAADEHGIAMIFTDMRHFRH.

Residues 1–148 form the MGS-like domain; that stretch reads MQQRRPVRRA…KNHKDVAIVV (148 aa).

Belongs to the PurH family.

The catalysed reaction is (6R)-10-formyltetrahydrofolate + 5-amino-1-(5-phospho-beta-D-ribosyl)imidazole-4-carboxamide = 5-formamido-1-(5-phospho-D-ribosyl)imidazole-4-carboxamide + (6S)-5,6,7,8-tetrahydrofolate. It catalyses the reaction IMP + H2O = 5-formamido-1-(5-phospho-D-ribosyl)imidazole-4-carboxamide. It participates in purine metabolism; IMP biosynthesis via de novo pathway; 5-formamido-1-(5-phospho-D-ribosyl)imidazole-4-carboxamide from 5-amino-1-(5-phospho-D-ribosyl)imidazole-4-carboxamide (10-formyl THF route): step 1/1. It functions in the pathway purine metabolism; IMP biosynthesis via de novo pathway; IMP from 5-formamido-1-(5-phospho-D-ribosyl)imidazole-4-carboxamide: step 1/1. This chain is Bifunctional purine biosynthesis protein PurH, found in Klebsiella pneumoniae subsp. pneumoniae (strain ATCC 700721 / MGH 78578).